The following is a 360-amino-acid chain: Photosystem II protein D1 (360 aa).

A run of 3 helical transmembrane segments spans residues 29 to 46, 118 to 133, and 142 to 156; these read YIGW…TATS, HFLL…EWEF, and WISV…AASA. Residue H118 coordinates chlorophyll a. Residue Y126 participates in pheophytin a binding. Residues D170 and E189 each coordinate [CaMn4O5] cluster. A helical membrane pass occupies residues 197–218; it reads LHQLGVAGVFGGSLFSAMHGSL. Residue H198 coordinates chlorophyll a. A quinone contacts are provided by residues H215 and 264–265; that span reads SF. H215 contributes to the Fe cation binding site. H272 contacts Fe cation. The chain crosses the membrane as a helical span at residues 274 to 288; that stretch reads FLGLWPVVGIWFTSM. 4 residues coordinate [CaMn4O5] cluster: H332, E333, D342, and A344. A propeptide spanning residues 345–360 is cleaved from the precursor; that stretch reads SNESLPLALVAPAING.

Belongs to the reaction center PufL/M/PsbA/D family. In terms of assembly, PSII is composed of 1 copy each of membrane proteins PsbA, PsbB, PsbC, PsbD, PsbE, PsbF, PsbH, PsbI, PsbJ, PsbK, PsbL, PsbM, PsbT, PsbX, PsbY, PsbZ, Psb30/Ycf12, at least 3 peripheral proteins of the oxygen-evolving complex and a large number of cofactors. It forms dimeric complexes. It depends on The D1/D2 heterodimer binds P680, chlorophylls that are the primary electron donor of PSII, and subsequent electron acceptors. It shares a non-heme iron and each subunit binds pheophytin, quinone, additional chlorophylls, carotenoids and lipids. D1 provides most of the ligands for the Mn4-Ca-O5 cluster of the oxygen-evolving complex (OEC). There is also a Cl(-1) ion associated with D1 and D2, which is required for oxygen evolution. The PSII complex binds additional chlorophylls, carotenoids and specific lipids. as a cofactor. Post-translationally, tyr-161 forms a radical intermediate that is referred to as redox-active TyrZ, YZ or Y-Z. C-terminally processed by CTPA; processing is essential to allow assembly of the oxygen-evolving complex and thus photosynthetic growth.

It is found in the plastid. The protein localises to the chloroplast thylakoid membrane. The enzyme catalyses 2 a plastoquinone + 4 hnu + 2 H2O = 2 a plastoquinol + O2. In terms of biological role, photosystem II (PSII) is a light-driven water:plastoquinone oxidoreductase that uses light energy to abstract electrons from H(2)O, generating O(2) and a proton gradient subsequently used for ATP formation. It consists of a core antenna complex that captures photons, and an electron transfer chain that converts photonic excitation into a charge separation. The D1/D2 (PsbA/PsbD) reaction center heterodimer binds P680, the primary electron donor of PSII as well as several subsequent electron acceptors. The chain is Photosystem II protein D1 from Antithamnion sp. (Red alga).